Reading from the N-terminus, the 518-residue chain is MAKITELDHHLNQEKEALDKVVSNLNELCEHNQKLQGFIEIQKEVKELKKEHIKSLSWFKKLINTVSNIKYVFVKSEEQLAKDAIEQNNKLLKRIDNTILSVADKSGPLKQELQKELRKNFENLAKKDLSKDQRERLSNLLNNEYAANPQKFAQLPMSKPLHFPNAEELENQHNDLKVIQQNVLNLLTENSNIEELKKIQKQVAEIREEVPFTKLEKLNNFWQKIKNIFVNNSEQVLAKNKENNTKTIINIEEKLHKANNKFFELVSNKKQDIENIISNLPDSKRLEAIKEKLQKHINVKDTNNIAEQASAAQLQSAETKPTAVVLPNNAIPTTPPVTEEKTFTPPPAPPPPMPTDNIPTPLPVSKAEATEHKNVETAASNVPPPPPPPMPTGNVPPPPPVGDNTVTSTPQKAKETNQPRPAVDTTNLMKQIQGGFNLKKIEYGEDGKPIPKNKEDTKETSDPIIAALNKIRSAKVSSDSERSNSDSGTDSGWASDVSTRSKKVLTRRERNAKQSQQR.

Residues 310–518 are disordered; it reads SAAQLQSAET…ERNAKQSQQR (209 aa). Composition is skewed to pro residues over residues 344–354 and 382–401; these read TPPPAPPPPMP and VPPP…PPPV. The segment covering 418 to 430 has biased composition (polar residues); it reads QPRPAVDTTNLMK. One can recognise a WH2 domain in the interval 424 to 441; sequence DTTNLMKQIQGGFNLKKI. Basic and acidic residues predominate over residues 439–461; it reads KKIEYGEDGKPIPKNKEDTKETS. Residues 488–498 are compositionally biased toward polar residues; sequence GTDSGWASDVS.

Homodimer.

Its subcellular location is the cell surface. Recruits and activates the Arp2/3 complex, which in turn leads to actin polymerization, promoting Rickettsia motility during infection. The protein is Arp2/3 complex-activating protein rickA (rickA) of Rickettsia bellii (strain RML369-C).